Consider the following 275-residue polypeptide: 4-diphosphocytidyl-2-C-methyl-D-erythritol kinase (275 aa).

K14 is a catalytic residue. Residue 98–108 (PMGAGLGGGSS) coordinates ATP. The active site involves D140.

Belongs to the GHMP kinase family. IspE subfamily.

It catalyses the reaction 4-CDP-2-C-methyl-D-erythritol + ATP = 4-CDP-2-C-methyl-D-erythritol 2-phosphate + ADP + H(+). It participates in isoprenoid biosynthesis; isopentenyl diphosphate biosynthesis via DXP pathway; isopentenyl diphosphate from 1-deoxy-D-xylulose 5-phosphate: step 3/6. Functionally, catalyzes the phosphorylation of the position 2 hydroxy group of 4-diphosphocytidyl-2C-methyl-D-erythritol. The sequence is that of 4-diphosphocytidyl-2-C-methyl-D-erythritol kinase from Francisella tularensis subsp. holarctica (strain FTNF002-00 / FTA).